A 289-amino-acid polypeptide reads, in one-letter code: MKSGFVSIIGRTNAGKSSFLNALLNEKIAIVSHKQNATRRKINGIVMNGEDQIIFTDTPGLHESNKAINQLLISQAIKSMGDCDLIVFLAPIHDDTSDYEKFLALNPEKPHILVLTKVDESSNAKVLEKITKYQKFQDKFAALLTFSTKQPTYKKPLLDEICKLLPEHEYFYDPEFLTPTNEKEIFREFILEAIYENLSDEIPYLSDAIIKSVKEKTGITEIYASIITERDIHKSMIIGKNGETIKRIGIFARKLIQNLTNTKVFLKLDVVVKKGWSKEEKSLNQIIGY.

The Era-type G domain maps to 2–167 (KSGFVSIIGR…LDEICKLLPE (166 aa)). The interval 10–17 (GRTNAGKS) is G1. Residue 10–17 (GRTNAGKS) coordinates GTP. Positions 36-40 (NATRR) are G2. Positions 57-60 (DTPG) are G3. GTP is bound by residues 57 to 61 (DTPGL) and 116 to 119 (TKVD). The tract at residues 116 to 119 (TKVD) is G4. Positions 146–148 (FST) are G5. The region spanning 194 to 274 (IYENLSDEIP…FLKLDVVVKK (81 aa)) is the KH type-2 domain.

Belongs to the TRAFAC class TrmE-Era-EngA-EngB-Septin-like GTPase superfamily. Era GTPase family. As to quaternary structure, monomer.

The protein localises to the cytoplasm. The protein resides in the cell inner membrane. Functionally, an essential GTPase that binds both GDP and GTP, with rapid nucleotide exchange. Plays a role in 16S rRNA processing and 30S ribosomal subunit biogenesis and possibly also in cell cycle regulation and energy metabolism. The protein is GTPase Era of Campylobacter concisus (strain 13826).